The chain runs to 211 residues: Peptide methionine sulfoxide reductase MsrA (211 aa).

Cys52 is an active-site residue.

Belongs to the MsrA Met sulfoxide reductase family.

It catalyses the reaction L-methionyl-[protein] + [thioredoxin]-disulfide + H2O = L-methionyl-(S)-S-oxide-[protein] + [thioredoxin]-dithiol. The catalysed reaction is [thioredoxin]-disulfide + L-methionine + H2O = L-methionine (S)-S-oxide + [thioredoxin]-dithiol. In terms of biological role, has an important function as a repair enzyme for proteins that have been inactivated by oxidation. Catalyzes the reversible oxidation-reduction of methionine sulfoxide in proteins to methionine. This is Peptide methionine sulfoxide reductase MsrA from Photobacterium profundum (strain SS9).